The sequence spans 619 residues: MRILLIYMLGLSGIACASSIKEIVKESREKLEKGLGYKLSSSEIRMLRRLFEKNAGLETRVVIPVILHQSKVVVSPGTRYRDIEEGERKYVEKVIKLLPEVAWRSITHIYALANNDWAVDLMYDVFDKASSWRSDTVALYKGTEKKYGMKFTDLVNGIFEQNNCILKEFGRLLADRVEILIQELPGSLDDVEKKREEEVLRKIKEYGRRLCTKEKQDEIIKAQRIMCNVCEYIWKREEDRKSFIMEVYSTYLKLREMESNVDEIEEPLIYFVDHRGLINACDKYKSMDIMAELILQLFLQGKNIDDKSIKSAVRSVRERKRLEEMREMEERKRREEERAKNEEELLRMVEREKREESKGRGKKKGGKRGAGEAKEESKEEDRKEEEGVEVEEEESAEVPLVETVVGGARRKKKGSREKKMGEEHHYKVHSRVLRWKKDAEKIKRELDKGSEERWKGKSVEEIKEQKKVHDIVEVSELLRDKEKCDRFFVRTGKYMKGGSERWKMVANGILEEGGEKKVGKVEVGLFKGGRGESVVYHLMFRPTETERTGMVGGSSFGEGDDVDEIKKEKSSDMSGFRYPSGVRCEMTSNGNEFRIEYRNRKNTSEVLRTLTILRIPEIL.

Basic and acidic residues-rich tracts occupy residues 350-359 and 369-385; these read EREKREESKG and GAGE…RKEE. The disordered stretch occupies residues 350 to 425; that stretch reads EREKREESKG…REKKMGEEHH (76 aa). The segment covering 386–396 has biased composition (acidic residues); it reads EGVEVEEEESA.

Belongs to the UPF0329 family.

This chain is UPF0329 protein ECU08_2070, found in Encephalitozoon cuniculi (strain GB-M1) (Microsporidian parasite).